The chain runs to 445 residues: Enolase 2 (445 aa).

Residues His-164 and Glu-173 each contribute to the substrate site. Residue Glu-216 is the Proton donor of the active site. Positions 251, 301, and 328 each coordinate Mg(2+). Residues Glu-301 and Asp-328 each contribute to the substrate site. Residue Lys-353 is the Proton acceptor of the active site. Substrate-binding positions include 380-383 and Lys-404; that span reads SHRS.

It belongs to the enolase family. Homodimer. Mg(2+) is required as a cofactor.

The protein resides in the cytoplasm. It catalyses the reaction (2R)-2-phosphoglycerate = phosphoenolpyruvate + H2O. The protein operates within carbohydrate degradation; glycolysis; pyruvate from D-glyceraldehyde 3-phosphate: step 4/5. In Hevea brasiliensis (Para rubber tree), this protein is Enolase 2 (ENO2).